A 216-amino-acid chain; its full sequence is ATP phosphoribosyltransferase (216 aa).

Belongs to the ATP phosphoribosyltransferase family. Short subfamily. As to quaternary structure, heteromultimer composed of HisG and HisZ subunits.

The protein resides in the cytoplasm. The enzyme catalyses 1-(5-phospho-beta-D-ribosyl)-ATP + diphosphate = 5-phospho-alpha-D-ribose 1-diphosphate + ATP. Its pathway is amino-acid biosynthesis; L-histidine biosynthesis; L-histidine from 5-phospho-alpha-D-ribose 1-diphosphate: step 1/9. Functionally, catalyzes the condensation of ATP and 5-phosphoribose 1-diphosphate to form N'-(5'-phosphoribosyl)-ATP (PR-ATP). Has a crucial role in the pathway because the rate of histidine biosynthesis seems to be controlled primarily by regulation of HisG enzymatic activity. The sequence is that of ATP phosphoribosyltransferase from Acidovorax ebreus (strain TPSY) (Diaphorobacter sp. (strain TPSY)).